Reading from the N-terminus, the 428-residue chain is Gamma-glutamyl phosphate reductase (428 aa).

This sequence belongs to the gamma-glutamyl phosphate reductase family.

Its subcellular location is the cytoplasm. The enzyme catalyses L-glutamate 5-semialdehyde + phosphate + NADP(+) = L-glutamyl 5-phosphate + NADPH + H(+). The protein operates within amino-acid biosynthesis; L-proline biosynthesis; L-glutamate 5-semialdehyde from L-glutamate: step 2/2. In terms of biological role, catalyzes the NADPH-dependent reduction of L-glutamate 5-phosphate into L-glutamate 5-semialdehyde and phosphate. The product spontaneously undergoes cyclization to form 1-pyrroline-5-carboxylate. The polypeptide is Gamma-glutamyl phosphate reductase (Treponema pallidum (strain Nichols)).